We begin with the raw amino-acid sequence, 120 residues long: Large ribosomal subunit protein uL18 (120 aa).

This sequence belongs to the universal ribosomal protein uL18 family. Part of the 50S ribosomal subunit; part of the 5S rRNA/L5/L18/L25 subcomplex. Contacts the 5S and 23S rRNAs.

In terms of biological role, this is one of the proteins that bind and probably mediate the attachment of the 5S RNA into the large ribosomal subunit, where it forms part of the central protuberance. This Bartonella quintana (strain Toulouse) (Rochalimaea quintana) protein is Large ribosomal subunit protein uL18.